The sequence spans 386 residues: Dual-specificity RNA methyltransferase RlmN (386 aa).

The Proton acceptor role is filled by glutamate 94. The 242-residue stretch at 100–341 (EENRGTLCIS…VTTIRKTRGD (242 aa)) folds into the Radical SAM core domain. Cysteine 107 and cysteine 347 are oxidised to a cystine. [4Fe-4S] cluster is bound by residues cysteine 114, cysteine 118, and cysteine 121. Residues 173 to 174 (GE), serine 205, 227 to 229 (SLH), and asparagine 304 contribute to the S-adenosyl-L-methionine site. The active-site S-methylcysteine intermediate is the cysteine 347.

It belongs to the radical SAM superfamily. RlmN family. The cofactor is [4Fe-4S] cluster.

It localises to the cytoplasm. The catalysed reaction is adenosine(2503) in 23S rRNA + 2 reduced [2Fe-2S]-[ferredoxin] + 2 S-adenosyl-L-methionine = 2-methyladenosine(2503) in 23S rRNA + 5'-deoxyadenosine + L-methionine + 2 oxidized [2Fe-2S]-[ferredoxin] + S-adenosyl-L-homocysteine. It carries out the reaction adenosine(37) in tRNA + 2 reduced [2Fe-2S]-[ferredoxin] + 2 S-adenosyl-L-methionine = 2-methyladenosine(37) in tRNA + 5'-deoxyadenosine + L-methionine + 2 oxidized [2Fe-2S]-[ferredoxin] + S-adenosyl-L-homocysteine. Its function is as follows. Specifically methylates position 2 of adenine 2503 in 23S rRNA and position 2 of adenine 37 in tRNAs. m2A2503 modification seems to play a crucial role in the proofreading step occurring at the peptidyl transferase center and thus would serve to optimize ribosomal fidelity. The chain is Dual-specificity RNA methyltransferase RlmN from Herminiimonas arsenicoxydans.